Here is a 1149-residue protein sequence, read N- to C-terminus: Structural maintenance of chromosomes protein 6 homolog smc-6 (1149 aa).

77 to 84 (GPNGSGKS) contributes to the ATP binding site. Residues 309–460 (LQDETKKEYA…EEEKYTIQRD (152 aa)) adopt a coiled-coil conformation. A flexible hinge region spans residues 461 to 687 (INQLRRKIEQ…DVDEGALARL (227 aa)). Residues 714 to 920 (YNERDQTKAA…AVDRATVGCD (207 aa)) are a coiled coil. 2 disordered regions span residues 875–900 (NDKK…STTE) and 1026–1060 (EVDE…VRDL). Residues 1026 to 1038 (EVDEHSYDDDSDD) show a composition bias toward acidic residues. Basic residues predominate over residues 1042 to 1058 (PRRKKSKKSGQKKKRVR).

It belongs to the SMC family. SMC6 subfamily. As to quaternary structure, interacts with smc-5. In terms of tissue distribution, expressed in the germline (at protein level).

It localises to the nucleus. The protein resides in the chromosome. Core component of the smc-5/smc-6 complex. Involved in DNA double-strand break repair by promoting sister-chromatid homologous recombination during meiosis. Also plays a role in the DNA damage repair of ultraviolet (UV) radiation-induced DNA lesions. Promotes efficient DNA replication. This is Structural maintenance of chromosomes protein 6 homolog smc-6 from Caenorhabditis elegans.